The primary structure comprises 156 residues: MQATKSPDDLVKTFKSILKEERFGSQSEIVTALQAEGFSNINQSKVSRMLSKFGAVRTRNAKQEMVYCLPAELGVPTAGSPLKNLVLDVDHNQAMIVVRTSPGAAQLIARLLDSIGKPEGILGTIAGDDTIFICPSSIHNIEDTLETVKSLFNYAD.

Belongs to the ArgR family.

It localises to the cytoplasm. Its pathway is amino-acid biosynthesis; L-arginine biosynthesis [regulation]. In terms of biological role, regulates arginine biosynthesis genes. In Shewanella halifaxensis (strain HAW-EB4), this protein is Arginine repressor.